The following is a 268-amino-acid chain: tRNA pseudouridine synthase A (268 aa).

The Nucleophile role is filled by Asp-63. Tyr-122 contributes to the substrate binding site.

It belongs to the tRNA pseudouridine synthase TruA family. As to quaternary structure, homodimer.

It catalyses the reaction uridine(38/39/40) in tRNA = pseudouridine(38/39/40) in tRNA. In terms of biological role, formation of pseudouridine at positions 38, 39 and 40 in the anticodon stem and loop of transfer RNAs. This is tRNA pseudouridine synthase A from Treponema denticola (strain ATCC 35405 / DSM 14222 / CIP 103919 / JCM 8153 / KCTC 15104).